The primary structure comprises 110 residues: DNA-directed RNA polymerase subunit omega (110 aa).

The protein belongs to the RNA polymerase subunit omega family. The RNAP catalytic core consists of 2 alpha, 1 beta, 1 beta' and 1 omega subunit. When a sigma factor is associated with the core the holoenzyme is formed, which can initiate transcription.

The catalysed reaction is RNA(n) + a ribonucleoside 5'-triphosphate = RNA(n+1) + diphosphate. In terms of biological role, promotes RNA polymerase assembly. Latches the N- and C-terminal regions of the beta' subunit thereby facilitating its interaction with the beta and alpha subunits. This Vesicomyosocius okutanii subsp. Calyptogena okutanii (strain HA) protein is DNA-directed RNA polymerase subunit omega.